A 132-amino-acid polypeptide reads, in one-letter code: Small ribosomal subunit protein uS19 (132 aa).

Belongs to the universal ribosomal protein uS19 family.

Protein S19 forms a complex with S13 that binds strongly to the 16S ribosomal RNA. In Pyrococcus horikoshii (strain ATCC 700860 / DSM 12428 / JCM 9974 / NBRC 100139 / OT-3), this protein is Small ribosomal subunit protein uS19 (rps19).